A 227-amino-acid chain; its full sequence is Germin-like protein subfamily 1 member 6 (227 aa).

A signal peptide spans 1–25; it reads MMEVLLRLLVTQVILLALATSFVSC. Cysteines 35 and 51 form a disulfide. The 152-residue stretch at 65–216 folds into the Cupin type-1 domain; it reads SGLNIARNTT…AFQLDVKLVR (152 aa). 2 N-linked (GlcNAc...) asparagine glycosylation sites follow: N72 and N80. The Mn(2+) site is built by H113, H115, E120, and H162.

The protein belongs to the germin family. In terms of assembly, oligomer (believed to be a pentamer but probably hexamer).

Its subcellular location is the secreted. The protein resides in the extracellular space. It localises to the apoplast. May play a role in plant defense. Probably has no oxalate oxidase activity even if the active site is conserved. This Arabidopsis thaliana (Mouse-ear cress) protein is Germin-like protein subfamily 1 member 6.